The chain runs to 178 residues: Ribulose bisphosphate carboxylase small subunit, chloroplastic (178 aa).

The N-terminal 55 residues, 1–55 (MASSMMVSTAAVSRTSPAQSNMVVPFAGLHSSAAFPVTRKFADSSKLPSNGLRVR), are a transit peptide targeting the chloroplast.

Belongs to the RuBisCO small chain family. Heterohexadecamer of 8 large and 8 small subunits.

The protein resides in the plastid. It is found in the chloroplast. Functionally, ruBisCO catalyzes two reactions: the carboxylation of D-ribulose 1,5-bisphosphate, the primary event in carbon dioxide fixation, as well as the oxidative fragmentation of the pentose substrate. Both reactions occur simultaneously and in competition at the same active site. Although the small subunit is not catalytic it is essential for maximal activity. This is Ribulose bisphosphate carboxylase small subunit, chloroplastic from Zantedeschia aethiopica (White calla lily).